A 362-amino-acid chain; its full sequence is L-arginine:L-lysine amidinotransferase (362 aa).

Catalysis depends on residues Asp195 and His244. Cys346 acts as the Amidino-cysteine intermediate in catalysis.

It belongs to the amidinotransferase family.

The enzyme catalyses L-lysine + L-arginine = L-homoarginine + L-ornithine. It carries out the reaction L-canavanine + L-ornithine = L-canaline + L-arginine + H(+). Its function is as follows. Involved in the biosynthesis of phaseolotoxin, a nonhost-specific toxin which is a key component in the development of the halo blight disease of beans. Catalyzes the transfer of an amidino group from arginine to lysine to produce one molecule of homoarginine and one molecule of ornithine, both being precursors in the biosynthesis of phaseolotoxin. Can also use L-canavanine as an alternative amidine donor with L-ornithine as amidine acceptor. The polypeptide is L-arginine:L-lysine amidinotransferase (Pseudomonas savastanoi pv. phaseolicola (Pseudomonas syringae pv. phaseolicola)).